The following is a 556-amino-acid chain: Glucose-6-phosphate isomerase (556 aa).

E360 (proton donor) is an active-site residue. Active-site residues include H391 and K519.

This sequence belongs to the GPI family.

The protein localises to the cytoplasm. The catalysed reaction is alpha-D-glucose 6-phosphate = beta-D-fructose 6-phosphate. The protein operates within carbohydrate biosynthesis; gluconeogenesis. Its pathway is carbohydrate degradation; glycolysis; D-glyceraldehyde 3-phosphate and glycerone phosphate from D-glucose: step 2/4. In terms of biological role, catalyzes the reversible isomerization of glucose-6-phosphate to fructose-6-phosphate. In Acinetobacter baumannii (strain SDF), this protein is Glucose-6-phosphate isomerase.